The following is a 572-amino-acid chain: Isocitrate dehydrogenase kinase/phosphatase (572 aa).

ATP-binding positions include 317–323 (APGVRGM) and Lys-338. The active site involves Asp-373.

This sequence belongs to the AceK family.

The protein localises to the cytoplasm. The catalysed reaction is L-seryl-[isocitrate dehydrogenase] + ATP = O-phospho-L-seryl-[isocitrate dehydrogenase] + ADP + H(+). Its function is as follows. Bifunctional enzyme which can phosphorylate or dephosphorylate isocitrate dehydrogenase (IDH) on a specific serine residue. This is a regulatory mechanism which enables bacteria to bypass the Krebs cycle via the glyoxylate shunt in response to the source of carbon. When bacteria are grown on glucose, IDH is fully active and unphosphorylated, but when grown on acetate or ethanol, the activity of IDH declines drastically concomitant with its phosphorylation. The protein is Isocitrate dehydrogenase kinase/phosphatase of Ectopseudomonas mendocina (strain ymp) (Pseudomonas mendocina).